A 498-amino-acid polypeptide reads, in one-letter code: Acetyl-coenzyme A carboxylase carboxyl transferase subunit beta, chloroplastic (498 aa).

The 271-residue stretch at 228–498 folds into the CoA carboxyltransferase N-terminal domain; it reads LWVQCEICYG…LNHNLSRTLT (271 aa). C232, C235, C251, and C254 together coordinate Zn(2+). The segment at 232–254 adopts a C4-type zinc-finger fold; the sequence is CEICYGLNYKKFFKSKMNICEQC.

Belongs to the AccD/PCCB family. In terms of assembly, acetyl-CoA carboxylase is a heterohexamer composed of biotin carboxyl carrier protein, biotin carboxylase and 2 subunits each of ACCase subunit alpha and ACCase plastid-coded subunit beta (accD). The cofactor is Zn(2+).

The protein localises to the plastid. It is found in the chloroplast stroma. It carries out the reaction N(6)-carboxybiotinyl-L-lysyl-[protein] + acetyl-CoA = N(6)-biotinyl-L-lysyl-[protein] + malonyl-CoA. The protein operates within lipid metabolism; malonyl-CoA biosynthesis; malonyl-CoA from acetyl-CoA: step 1/1. Component of the acetyl coenzyme A carboxylase (ACC) complex. Biotin carboxylase (BC) catalyzes the carboxylation of biotin on its carrier protein (BCCP) and then the CO(2) group is transferred by the transcarboxylase to acetyl-CoA to form malonyl-CoA. The protein is Acetyl-coenzyme A carboxylase carboxyl transferase subunit beta, chloroplastic of Populus alba (White poplar).